Consider the following 304-residue polypeptide: Probable casein kinase I homolog ECU03_0910 (304 aa).

Positions 8–304 (IKLVQKIASG…SDSMGDLEIL (297 aa)) constitute a Protein kinase domain. ATP is bound by residues 14–22 (IASGAFGDI) and lysine 37. Aspartate 129 serves as the catalytic Proton acceptor.

It belongs to the protein kinase superfamily. CK1 Ser/Thr protein kinase family. Casein kinase I subfamily.

It localises to the nucleus. It catalyses the reaction L-seryl-[protein] + ATP = O-phospho-L-seryl-[protein] + ADP + H(+). It carries out the reaction L-threonyl-[protein] + ATP = O-phospho-L-threonyl-[protein] + ADP + H(+). Involved in DNA repair. May regulate the activity of protein(s) involved in double strand break repair caused by gamma rays. This chain is Probable casein kinase I homolog ECU03_0910, found in Encephalitozoon cuniculi (strain GB-M1) (Microsporidian parasite).